Consider the following 511-residue polypeptide: RNA polymerase principal sigma factor HrdB (511 aa).

A disordered region spans residues 72–186; the sequence is SAAEPKRTRK…AATEEPEGTE (115 aa). Basic residues predominate over residues 78–93; it reads RTRKSVAAKSPAKRTA. The span at 94–121 shows a compositional bias: low complexity; it reads TKAVAAKPVTSRKATAPAAPAAPATEPA. Over residues 132-158 the composition is skewed to basic residues; that stretch reads AAAKKTTAKKATAKKTTAKKAAAKKTT. Residues 211 to 347 form a binds RNA polymerase-binding protein RbpA region; the sequence is TADPVKDYLK…ITRAMADQAR (137 aa). Residues 278-348 are sigma-70 factor domain-2; the sequence is LLEANLRLVV…TRAMADQART (71 aa). The short motif at 302–305 is the Interaction with polymerase core subunit RpoC element; the sequence is DLIQ. The segment at 357 to 433 is sigma-70 factor domain-3; the sequence is EVINKLARVQ…DSEAVVPADA (77 aa). A sigma-70 factor domain-4 region spans residues 446 to 499; that stretch reads VLDTLSEREAGVVSMRFGLTDGQPKTLDEIGKVYGVTRERIRQIESKTMSKLRH. Residues 472 to 491 constitute a DNA-binding region (H-T-H motif); it reads LDEIGKVYGVTRERIRQIES.

It belongs to the sigma-70 factor family. In terms of assembly, homotrimer (Potential). interacts transiently with the RNA polymerase core complex. Interacts with RNA polymerase-binding protein RbpA via its sigma-2 region (residues 211-347) in a free form.

Functionally, sigma factors are initiation factors that promote the attachment of RNA polymerase to specific initiation sites and are then released. This sigma factor is the primary sigma factor during exponential growth. Its activity is stimulated by RbpA. This chain is RNA polymerase principal sigma factor HrdB (hrdB), found in Streptomyces coelicolor (strain ATCC BAA-471 / A3(2) / M145).